A 354-amino-acid chain; its full sequence is Uroporphyrinogen decarboxylase (354 aa).

Substrate is bound by residues 25–29 (RQAGR), D75, Y152, T207, and H330.

It belongs to the uroporphyrinogen decarboxylase family. Homodimer.

Its subcellular location is the cytoplasm. The catalysed reaction is uroporphyrinogen III + 4 H(+) = coproporphyrinogen III + 4 CO2. It participates in porphyrin-containing compound metabolism; protoporphyrin-IX biosynthesis; coproporphyrinogen-III from 5-aminolevulinate: step 4/4. Its function is as follows. Catalyzes the decarboxylation of four acetate groups of uroporphyrinogen-III to yield coproporphyrinogen-III. In Xanthomonas oryzae pv. oryzae (strain MAFF 311018), this protein is Uroporphyrinogen decarboxylase.